The sequence spans 255 residues: Acetylglutamate kinase (255 aa).

Substrate contacts are provided by residues 40-41, Arg-62, and Asn-153; that span reads GG.

This sequence belongs to the acetylglutamate kinase family. ArgB subfamily.

Its subcellular location is the cytoplasm. The catalysed reaction is N-acetyl-L-glutamate + ATP = N-acetyl-L-glutamyl 5-phosphate + ADP. It participates in amino-acid biosynthesis; L-arginine biosynthesis; N(2)-acetyl-L-ornithine from L-glutamate: step 2/4. Catalyzes the ATP-dependent phosphorylation of N-acetyl-L-glutamate. The sequence is that of Acetylglutamate kinase from Bacillus cereus (strain 03BB102).